The following is a 315-amino-acid chain: Glycine--tRNA ligase alpha subunit (315 aa).

This sequence belongs to the class-II aminoacyl-tRNA synthetase family. Tetramer of two alpha and two beta subunits.

The protein localises to the cytoplasm. The enzyme catalyses tRNA(Gly) + glycine + ATP = glycyl-tRNA(Gly) + AMP + diphosphate. In Sorangium cellulosum (strain So ce56) (Polyangium cellulosum (strain So ce56)), this protein is Glycine--tRNA ligase alpha subunit.